Here is a 647-residue protein sequence, read N- to C-terminus: Zinc finger protein 567 (647 aa).

Positions 32–77 constitute a KRAB domain; it reads MDVMLENYCHLISVGCHMTKPDVILKLERGEEPWTSFKGHTCLEEN. Glycyl lysine isopeptide (Lys-Gly) (interchain with G-Cter in SUMO2) cross-links involve residues lysine 173, lysine 202, and lysine 217. The C2H2-type 1; degenerate zinc finger occupies 210–232; the sequence is FEYNDCEKAFLKRGGPVTHSRTY. 7 C2H2-type zinc fingers span residues 253 to 275, 281 to 303, 309 to 331, 337 to 359, 365 to 387, 393 to 415, and 421 to 443; these read HTCT…QGIH, YQCH…QRTH, FVCN…QRTH, YECP…QRTH, YECS…QRIH, YICK…QRTH, and YICN…EKTH. Lysine 447 participates in a covalent cross-link: Glycyl lysine isopeptide (Lys-Gly) (interchain with G-Cter in SUMO2). 7 consecutive C2H2-type zinc fingers follow at residues 449-471, 477-499, 505-527, 533-555, 561-583, 589-611, and 617-639; these read YICN…QRTH, YECP…HRTH, YECN…QRIH, YICN…QKIH, YECP…QRTH, and YKCS…QRTH.

Belongs to the krueppel C2H2-type zinc-finger protein family.

It is found in the nucleus. In terms of biological role, may be involved in transcriptional regulation. The chain is Zinc finger protein 567 (ZNF567) from Bos taurus (Bovine).